The primary structure comprises 331 residues: Type II secretion system protein K (331 aa).

The propeptide at Met1–Gly9 is leader sequence. A helical membrane pass occupies residues Gly8–Ser27. Residues Asn28 to Glu331 lie on the Periplasmic side of the membrane.

This sequence belongs to the GSP K family. As to quaternary structure, type II secretion is composed of four main components: the outer membrane complex, the inner membrane complex, the cytoplasmic secretion ATPase and the periplasm-spanning pseudopilus. Interacts with core component ExeG. In terms of processing, cleaved by prepilin peptidase.

The protein resides in the cell inner membrane. Its function is as follows. Component of the type II secretion system required for the energy-dependent secretion of extracellular factors such as proteases and toxins from the periplasm. Plays a role in pseudopilus assembly and seems to control its length. Interacts with the pseudopilus tip complex that is critical for the recognition and binding of secretion substrates. In Aeromonas hydrophila, this protein is Type II secretion system protein K (exeK).